Consider the following 196-residue polypeptide: MLDRIKVCFTESIQTQIAAAEALPDAISRAAIMMVQSLLNGNKILCCGNGGSAATAQRFAANMINRFETERPSLPALSLNADNVVITAISSNKQHDEIYAKQVRALGQPGDVLLAISTHGNSRDIVKAVEAAVTRDMTIVALTGYDGGELAGLLGPQDVEIRIPSHRSTRIQEVHMLTVNCLCDLIDNTLFPHQDD.

Positions 34-196 (MVQSLLNGNK…DNTLFPHQDD (163 aa)) constitute an SIS domain.

This sequence belongs to the SIS family. DiaA subfamily. As to quaternary structure, homotetramer; dimer of dimers.

Required for the timely initiation of chromosomal replication via direct interactions with the DnaA initiator protein. This chain is DnaA initiator-associating protein DiaA, found in Photorhabdus laumondii subsp. laumondii (strain DSM 15139 / CIP 105565 / TT01) (Photorhabdus luminescens subsp. laumondii).